We begin with the raw amino-acid sequence, 868 residues long: LPS-assembly protein LptD (868 aa).

Residues 1-24 (MLKGIHKYLLMCFGTVLFTVQANA) form the signal peptide.

This sequence belongs to the LptD family. Component of the lipopolysaccharide transport and assembly complex. Interacts with LptE and LptA.

The protein resides in the cell outer membrane. In terms of biological role, together with LptE, is involved in the assembly of lipopolysaccharide (LPS) at the surface of the outer membrane. This chain is LPS-assembly protein LptD, found in Francisella tularensis subsp. novicida (strain U112).